A 361-amino-acid polypeptide reads, in one-letter code: Homeobox protein knotted-1-like 6 (361 aa).

The disordered stretch occupies residues 11–48 (VGASGVHGGHQHQHHHHPWGSSLSAIVAPPPPPQLQQQ). The segment covering 19–28 (GHQHQHHHHP) has biased composition (basic residues). In terms of domain architecture, ELK spans 242–262 (ELKHHLLKKYSGYLSSLKQEL). A DNA-binding region (homeobox; TALE-type) is located at residues 263–326 (SKKKKKGKLP…NQRKRHWKPS (64 aa)).

The protein belongs to the TALE/KNOX homeobox family. In terms of assembly, interacts with FTIP7. In terms of tissue distribution, expressed predominantly in shoot apices. Also found to a lesser extent in glumes.

It is found in the nucleus. The protein localises to the cytoplasm. In terms of biological role, transcription factor that regulates genes involved in development. May be involved in shoot formation during embryogenesis. Overexpression in transgenic plants causes altered leaf morphology. Regulates anther dehiscence via direct repression of the auxin biosynthetic gene YUCCA4. Binds to the DNA sequence 5'-TGAC-3' in the promoter of the YUCCA4 gene and represses its activity during anther development. Reduction of auxin levels at late stage of anther development, after meiosis of microspore mother cells, is necessary for normal anther dehiscence and seed setting. The sequence is that of Homeobox protein knotted-1-like 6 (OSH1) from Oryza sativa subsp. japonica (Rice).